A 268-amino-acid polypeptide reads, in one-letter code: GTP cyclohydrolase FolE2 (268 aa).

It belongs to the GTP cyclohydrolase IV family.

It carries out the reaction GTP + H2O = 7,8-dihydroneopterin 3'-triphosphate + formate + H(+). Its pathway is cofactor biosynthesis; 7,8-dihydroneopterin triphosphate biosynthesis; 7,8-dihydroneopterin triphosphate from GTP: step 1/1. Converts GTP to 7,8-dihydroneopterin triphosphate. The chain is GTP cyclohydrolase FolE2 from Paraburkholderia xenovorans (strain LB400).